Here is a 312-residue protein sequence, read N- to C-terminus: Lipoyl synthase (312 aa).

The segment covering 1–10 has biased composition (basic and acidic residues); sequence MNEAPAEKQK. The tract at residues 1–20 is disordered; it reads MNEAPAEKQKPQQGKRFSER. The [4Fe-4S] cluster site is built by cysteine 51, cysteine 56, cysteine 62, cysteine 77, cysteine 81, cysteine 84, and serine 290. One can recognise a Radical SAM core domain in the interval 63 to 280; the sequence is WSRKTATYLA…RSVGESLGLF (218 aa).

The protein belongs to the radical SAM superfamily. Lipoyl synthase family. [4Fe-4S] cluster serves as cofactor.

It is found in the cytoplasm. The catalysed reaction is [[Fe-S] cluster scaffold protein carrying a second [4Fe-4S](2+) cluster] + N(6)-octanoyl-L-lysyl-[protein] + 2 oxidized [2Fe-2S]-[ferredoxin] + 2 S-adenosyl-L-methionine + 4 H(+) = [[Fe-S] cluster scaffold protein] + N(6)-[(R)-dihydrolipoyl]-L-lysyl-[protein] + 4 Fe(3+) + 2 hydrogen sulfide + 2 5'-deoxyadenosine + 2 L-methionine + 2 reduced [2Fe-2S]-[ferredoxin]. It functions in the pathway protein modification; protein lipoylation via endogenous pathway; protein N(6)-(lipoyl)lysine from octanoyl-[acyl-carrier-protein]: step 2/2. Functionally, catalyzes the radical-mediated insertion of two sulfur atoms into the C-6 and C-8 positions of the octanoyl moiety bound to the lipoyl domains of lipoate-dependent enzymes, thereby converting the octanoylated domains into lipoylated derivatives. This is Lipoyl synthase from Chlamydia felis (strain Fe/C-56) (Chlamydophila felis).